Consider the following 344-residue polypeptide: Heat-inducible transcription repressor hrcA (344 aa).

This sequence belongs to the HrcA family.

Negative regulator of class I heat shock genes (grpE-dnaK-dnaJ and groELS operons). Prevents heat-shock induction of these operons. This Streptococcus pyogenes serotype M3 (strain ATCC BAA-595 / MGAS315) protein is Heat-inducible transcription repressor hrcA.